A 227-amino-acid polypeptide reads, in one-letter code: Cytochrome c oxidase subunit 2 (227 aa).

The Mitochondrial intermembrane segment spans residues 1 to 14 (MAYPFQLGLQDATS). A helical membrane pass occupies residues 15–45 (PIMEELLHFHDHTLMIVFLISSLVLYIISSM). Over 46 to 59 (LTTKLTHTSTMDAQ) the chain is Mitochondrial matrix. The chain crosses the membrane as a helical span at residues 60-87 (EVETVWTILPAIILVLIALPSLRILYMM). Residues 88-227 (DETNNPSLTV…YFETWSALMV (140 aa)) are Mitochondrial intermembrane-facing. Positions 161, 196, 198, 200, 204, and 207 each coordinate Cu cation. Residue E198 participates in Mg(2+) binding. Y218 is modified (phosphotyrosine).

This sequence belongs to the cytochrome c oxidase subunit 2 family. As to quaternary structure, component of the cytochrome c oxidase (complex IV, CIV), a multisubunit enzyme composed of 14 subunits. The complex is composed of a catalytic core of 3 subunits MT-CO1, MT-CO2 and MT-CO3, encoded in the mitochondrial DNA, and 11 supernumerary subunits COX4I, COX5A, COX5B, COX6A, COX6B, COX6C, COX7A, COX7B, COX7C, COX8 and NDUFA4, which are encoded in the nuclear genome. The complex exists as a monomer or a dimer and forms supercomplexes (SCs) in the inner mitochondrial membrane with NADH-ubiquinone oxidoreductase (complex I, CI) and ubiquinol-cytochrome c oxidoreductase (cytochrome b-c1 complex, complex III, CIII), resulting in different assemblies (supercomplex SCI(1)III(2)IV(1) and megacomplex MCI(2)III(2)IV(2)). Found in a complex with TMEM177, COA6, COX18, COX20, SCO1 and SCO2. Interacts with TMEM177 in a COX20-dependent manner. Interacts with COX20. Interacts with COX16. The cofactor is Cu cation.

The protein localises to the mitochondrion inner membrane. It catalyses the reaction 4 Fe(II)-[cytochrome c] + O2 + 8 H(+)(in) = 4 Fe(III)-[cytochrome c] + 2 H2O + 4 H(+)(out). Component of the cytochrome c oxidase, the last enzyme in the mitochondrial electron transport chain which drives oxidative phosphorylation. The respiratory chain contains 3 multisubunit complexes succinate dehydrogenase (complex II, CII), ubiquinol-cytochrome c oxidoreductase (cytochrome b-c1 complex, complex III, CIII) and cytochrome c oxidase (complex IV, CIV), that cooperate to transfer electrons derived from NADH and succinate to molecular oxygen, creating an electrochemical gradient over the inner membrane that drives transmembrane transport and the ATP synthase. Cytochrome c oxidase is the component of the respiratory chain that catalyzes the reduction of oxygen to water. Electrons originating from reduced cytochrome c in the intermembrane space (IMS) are transferred via the dinuclear copper A center (CU(A)) of subunit 2 and heme A of subunit 1 to the active site in subunit 1, a binuclear center (BNC) formed by heme A3 and copper B (CU(B)). The BNC reduces molecular oxygen to 2 water molecules using 4 electrons from cytochrome c in the IMS and 4 protons from the mitochondrial matrix. The protein is Cytochrome c oxidase subunit 2 (MT-CO2) of Chrysocyon brachyurus (Maned wolf).